Consider the following 327-residue polypeptide: Nocardicin C-9' epimerase (327 aa).

The residue at position 43 (Lys-43) is an N6-(pyridoxal phosphate)lysine.

Belongs to the ACC deaminase/D-cysteine desulfhydrase family. It depends on pyridoxal 5'-phosphate as a cofactor.

It carries out the reaction isonocardicin C = nocardicin C. The catalysed reaction is isonocardicin A = nocardicin A. It functions in the pathway antibiotic biosynthesis. Involved in the biosynthesis of the beta-lactam antibiotic nocardicin A. Catalyzes the interconversion of the nocardicin homoseryl side chain in both nocardicin A with isonocardicin A, and nocardicin C with isonocardicin C. This chain is Nocardicin C-9' epimerase, found in Nocardia uniformis subsp. tsuyamanensis.